The sequence spans 280 residues: Large ribosomal subunit protein uL2 (280 aa).

The interval 226-280 (NPIDHPHGGGEGRTSGGRHPVTPWGKPTKGAKTRNKKKASSQLIIRSRHAKKKGR) is disordered. Composition is skewed to basic residues over residues 254-264 (KGAKTRNKKKA) and 271-280 (RSRHAKKKGR).

Belongs to the universal ribosomal protein uL2 family. Part of the 50S ribosomal subunit. Forms a bridge to the 30S subunit in the 70S ribosome.

In terms of biological role, one of the primary rRNA binding proteins. Required for association of the 30S and 50S subunits to form the 70S ribosome, for tRNA binding and peptide bond formation. It has been suggested to have peptidyltransferase activity; this is somewhat controversial. Makes several contacts with the 16S rRNA in the 70S ribosome. In Roseobacter denitrificans (strain ATCC 33942 / OCh 114) (Erythrobacter sp. (strain OCh 114)), this protein is Large ribosomal subunit protein uL2.